The primary structure comprises 207 residues: Protein lin-7 homolog B (207 aa).

The Kinase interacting site motif lies at 1–13; sequence MAALVEPLGLERD. One can recognise an L27 domain in the interval 10–65; sequence LERDVSRAVELLERLQRSGELPPQKLQALQRVLQSRFCSAIREVYEQLYDTLDITG. In terms of domain architecture, PDZ spans 93-175; it reads VVELPKTDEG…SVKLVVRYTP (83 aa). The disordered stretch occupies residues 187–207; it reads KMRSARRRQQHHSYTSLESRG. Over residues 198 to 207 the composition is skewed to polar residues; that stretch reads HSYTSLESRG.

This sequence belongs to the lin-7 family. As to quaternary structure, forms a complex with CASK and CASKIN1. Component of the brain-specific heterotrimeric complex (LIN-10-LIN-2-LIN-7 complex) composed of at least APBA1, CASK, and LIN7, which associates with the motor protein KIF17 to transport vesicles along microtubules. Forms a heterotrimeric complex composed of MMP5, LIN7B and PATJ; the N-terminal L27 domain of PALS1 interacts with the L27 domain of PATJ and the C-terminal L27 domain of PALS1 interacts with the L27 domain of LIN7B. Forms a heterotrimeric complex with DLG1 and CASK via their L27 domains. Interacts with DLG4 and GRIN2B as well as CDH1 and CTNNB1, the channels KCNJ12/Kir2.2, KCNJ4/Kir2.3 and probably KCNJ2/Kir2.1 and SLC6A12/BGT-1 via its PDZ domain. The association of LIN7A with cadherin and beta-catenin is calcium-dependent, occurs at synaptic junctions and requires the actin cytoskeleton. Interacts with EGFR, ERBB2, ERBB3 and ERBB4 with both PDZ and KID domains. Associates with KIF17 via APBA1. Interacts with ASIC3. Interacts with TOPK. Interacts with RTKN. Interacts with APBA1. Interacts with MPP7. Interacts with DLG2. Interacts with DLG3. As to expression, expressed in the kidney; predominantly in the vasa recta.

The protein localises to the cell membrane. It localises to the basolateral cell membrane. It is found in the cell junction. Its subcellular location is the postsynaptic density membrane. The protein resides in the tight junction. Its function is as follows. Plays a role in establishing and maintaining the asymmetric distribution of channels and receptors at the plasma membrane of polarized cells. Forms membrane-associated multiprotein complexes that may regulate delivery and recycling of proteins to the correct membrane domains. The tripartite complex composed of LIN7 (LIN7A, LIN7B or LIN7C), CASK and APBA1 associates with the motor protein KIF17 to transport vesicles containing N-methyl-D-aspartate (NMDA) receptor subunit NR2B along microtubules. This complex may have the potential to couple synaptic vesicle exocytosis to cell adhesion in brain. Ensures the proper localization of GRIN2B (subunit 2B of the NMDA receptor) to neuronal postsynaptic density and may function in localizing synaptic vesicles at synapses where it is recruited by beta-catenin and cadherin. Required to localize Kir2 channels, GABA transporter (SLC6A12) and EGFR/ERBB1, ERBB2, ERBB3 and ERBB4 to the basolateral membrane of epithelial cells. May increase the amplitude of ASIC3 acid-evoked currents by stabilizing the channel at the cell surface. This is Protein lin-7 homolog B (Lin7b) from Mus musculus (Mouse).